We begin with the raw amino-acid sequence, 450 residues long: UDP-N-acetylmuramoylalanine--D-glutamate ligase (450 aa).

119–125 (GSNGKTT) lines the ATP pocket.

It belongs to the MurCDEF family.

The protein resides in the cytoplasm. The enzyme catalyses UDP-N-acetyl-alpha-D-muramoyl-L-alanine + D-glutamate + ATP = UDP-N-acetyl-alpha-D-muramoyl-L-alanyl-D-glutamate + ADP + phosphate + H(+). It functions in the pathway cell wall biogenesis; peptidoglycan biosynthesis. Its function is as follows. Cell wall formation. Catalyzes the addition of glutamate to the nucleotide precursor UDP-N-acetylmuramoyl-L-alanine (UMA). The protein is UDP-N-acetylmuramoylalanine--D-glutamate ligase of Streptococcus pneumoniae (strain ATCC BAA-255 / R6).